The primary structure comprises 125 residues: UPF0231 protein APL_0968 (125 aa).

It belongs to the UPF0231 family.

This is UPF0231 protein APL_0968 from Actinobacillus pleuropneumoniae serotype 5b (strain L20).